A 388-amino-acid polypeptide reads, in one-letter code: Norsolorinic acid reductase (388 aa).

Residue Y74 is the Proton donor of the active site. 233-243 (GVLGRGQFRSA) is an NADP(+) binding site.

This sequence belongs to the aldo/keto reductase family. Aldo/keto reductase 2 subfamily.

Its pathway is mycotoxin biosynthesis; aflatoxin biosynthesis. This chain is Norsolorinic acid reductase (norA), found in Aspergillus flavus (strain ATCC 200026 / FGSC A1120 / IAM 13836 / NRRL 3357 / JCM 12722 / SRRC 167).